We begin with the raw amino-acid sequence, 213 residues long: Thymidylate kinase (213 aa).

Position 9 to 16 (9 to 16 (GIEGCGKT)) interacts with ATP.

It belongs to the thymidylate kinase family.

It carries out the reaction dTMP + ATP = dTDP + ADP. Phosphorylation of dTMP to form dTDP in both de novo and salvage pathways of dTTP synthesis. The protein is Thymidylate kinase of Geobacter sulfurreducens (strain ATCC 51573 / DSM 12127 / PCA).